Reading from the N-terminus, the 643-residue chain is Inorganic pyrophosphatase TTM1 (643 aa).

The transit peptide at 1–15 (MALDSSVALSPRRRH) directs the protein to the mitochondrion. The 163-residue stretch at 248–410 (NPTYILKSSK…PHTYIEQIQL (163 aa)) folds into the CYTH domain. The chain crosses the membrane as a helical span at residues 618 to 638 (LESSTVPILLGLAIGCVGIFA).

Mg(2+) is required as a cofactor. Ubiquitously expressed in all tissues, with strong expression detected in senescent leaves.

It localises to the mitochondrion outer membrane. The enzyme catalyses diphosphate + H2O = 2 phosphate + H(+). Its function is as follows. Exhibits pyrophosphatase activity with stronger affinity for pyrophosphate (PPi), moderate affinity for ATP and ADP, and weak affinity for tripolyphosphate (PPPi). No activity observed toward uridine substrate. Positively regulates natural and dark-induced leaf senescence. This Arabidopsis thaliana (Mouse-ear cress) protein is Inorganic pyrophosphatase TTM1.